The chain runs to 194 residues: Adenylate kinase isoenzyme 1 (194 aa).

Position 1 is an N-acetylmethionine (methionine 1). An ATP-binding site is contributed by 18–23; the sequence is GSGKGT. Serine 38 carries the post-translational modification Phosphoserine. Positions 38–67 are NMP; sequence STGDLLRAEVSSGSARGKKLSEIMEKGQLV. AMP contacts are provided by residues threonine 39, arginine 44, 65–67, 94–97, and glutamine 101; these read QLV and GYPR. The LID stretch occupies residues 131-141; sequence KRGETSGRVDD. Residue arginine 132 participates in ATP binding. AMP is bound by residues arginine 138 and arginine 149. Glycine 177 contacts ATP.

The protein belongs to the adenylate kinase family. AK1 subfamily. As to quaternary structure, monomer. Requires Mg(2+) as cofactor.

The protein resides in the cytoplasm. It catalyses the reaction a ribonucleoside 5'-phosphate + ATP = a ribonucleoside 5'-diphosphate + ADP. The enzyme catalyses AMP + ATP = 2 ADP. It carries out the reaction dAMP + ATP = dADP + ADP. The catalysed reaction is dATP + AMP = dADP + ADP. It catalyses the reaction dAMP + dATP = 2 dADP. The enzyme catalyses a 2'-deoxyribonucleoside 5'-diphosphate + ATP = a 2'-deoxyribonucleoside 5'-triphosphate + ADP. It carries out the reaction a ribonucleoside 5'-diphosphate + ATP = a ribonucleoside 5'-triphosphate + ADP. The catalysed reaction is CDP + GTP = CTP + GDP. It catalyses the reaction GDP + ATP = GTP + ADP. The enzyme catalyses UDP + ATP = UTP + ADP. It carries out the reaction GTP + UDP = UTP + GDP. The catalysed reaction is dTDP + GTP = dTTP + GDP. It catalyses the reaction dCDP + GTP = dCTP + GDP. The enzyme catalyses dGDP + ATP = dGTP + ADP. It carries out the reaction dADP + GTP = dATP + GDP. The catalysed reaction is thiamine diphosphate + ADP = thiamine triphosphate + AMP. Catalyzes the reversible transfer of the terminal phosphate group between ATP and AMP. Also displays broad nucleoside diphosphate kinase activity. Plays an important role in cellular energy homeostasis and in adenine nucleotide metabolism. Also catalyzes at a very low rate the synthesis of thiamine triphosphate (ThTP) from thiamine diphosphate (ThDP) and ADP. This chain is Adenylate kinase isoenzyme 1, found in Oryctolagus cuniculus (Rabbit).